Consider the following 335-residue polypeptide: 2-keto-3-deoxygluconate permease (335 aa).

The next 10 membrane-spanning stretches (helical) occupy residues 10–30, 42–62, 77–97, 100–120, 141–161, 163–183, 200–220, 224–244, 254–274, and 289–309; these read IPGG…TAAP, GIIT…GASI, LVLT…QLLP, GIEV…AMDM, AFVL…LGSA, LASF…IGFA, QTLI…GVIL, LLGI…LIIA, TAGL…VIIA, and ALVA…TAMY.

Belongs to the KdgT transporter family.

The protein resides in the cell inner membrane. The enzyme catalyses 2-dehydro-3-deoxy-D-gluconate(in) + H(+)(in) = 2-dehydro-3-deoxy-D-gluconate(out) + H(+)(out). In terms of biological role, catalyzes the proton-dependent uptake of 2-keto-3-deoxygluconate (KDG) into the cell. The polypeptide is 2-keto-3-deoxygluconate permease (Tolumonas auensis (strain DSM 9187 / NBRC 110442 / TA 4)).